The primary structure comprises 569 residues: GATOR1 complex protein NPRL3 (569 aa).

Disordered regions lie at residues 27–60 (PFQR…EQDG) and 416–477 (PSEE…GDSP). Polar residues-rich tracts occupy residues 34-52 (HPAS…SNTG) and 438-468 (SLST…NSSA). Ser-476 is modified (phosphoserine).

The protein belongs to the NPR3 family. As to quaternary structure, within the GATOR complex, component of the GATOR1 subcomplex, made of DEPDC5, NPRL2 and NPRL3. GATOR1 mediates the strong interaction of the GATOR complex with small GTPases Rag (RagA/RRAGA, RagB/RRAGB, RagC/RRAGC and/or RagD/RRAGD) heterodimers. GATOR1 interacts with GPR155/LYCHOS; interaction takes place in presence of cholesterol and prevents interaction between GATOR1 and KICSTOR. As to expression, widely expressed. Expressed in the frontal lobe cortex as well as in the temporal, parietal, and occipital lobes.

Its subcellular location is the lysosome membrane. As a component of the GATOR1 complex functions as an inhibitor of the amino acid-sensing branch of the mTORC1 pathway. In response to amino acid depletion, the GATOR1 complex has GTPase activating protein (GAP) activity and strongly increases GTP hydrolysis by RagA/RRAGA (or RagB/RRAGB) within heterodimeric Rag complexes, thereby turning them into their inactive GDP-bound form, releasing mTORC1 from lysosomal surface and inhibiting mTORC1 signaling. In the presence of abundant amino acids, the GATOR1 complex is negatively regulated by GATOR2, the other GATOR subcomplex, in this amino acid-sensing branch of the TORC1 pathway. This is GATOR1 complex protein NPRL3 from Homo sapiens (Human).